The primary structure comprises 257 residues: Mating-type protein A2 (257 aa).

A DNA-binding region (HMG box) is located at residues 58–132 (YTRPRNQFVL…EENWHKYTHY (75 aa)). A disordered region spans residues 210–239 (QPKTKMNSNLSKLRFKSKQPPTPPEENSNV).

It belongs to the MATA2 family.

Its subcellular location is the nucleus. Functionally, mating type proteins are sequence specific DNA-binding proteins that act as master switches in yeast differentiation by controlling gene expression in a cell type-specific fashion. Transcriptional activator that induces the transcription of a-specific genes. In Kluyveromyces lactis (strain ATCC 8585 / CBS 2359 / DSM 70799 / NBRC 1267 / NRRL Y-1140 / WM37) (Yeast), this protein is Mating-type protein A2 (MATA2).